Here is a 464-residue protein sequence, read N- to C-terminus: Phospho-cellobiase (464 aa).

Catalysis depends on glutamate 172, which acts as the Proton donor. The Nucleophile role is filled by glutamate 361.

The protein belongs to the glycosyl hydrolase 1 family.

The polypeptide is Phospho-cellobiase (casB) (Klebsiella oxytoca).